Consider the following 213-residue polypeptide: A-type ATP synthase subunit D (213 aa).

Belongs to the V-ATPase D subunit family. In terms of assembly, has multiple subunits with at least A(3), B(3), C, D, E, F, H, I and proteolipid K(x).

The protein resides in the cell membrane. Functionally, component of the A-type ATP synthase that produces ATP from ADP in the presence of a proton gradient across the membrane. The protein is A-type ATP synthase subunit D of Saccharolobus islandicus (strain L.S.2.15 / Lassen #1) (Sulfolobus islandicus).